The primary structure comprises 315 residues: Aspartate carbamoyltransferase catalytic subunit (315 aa).

2 residues coordinate carbamoyl phosphate: Arg-64 and Thr-65. Position 92 (Lys-92) interacts with L-aspartate. Carbamoyl phosphate contacts are provided by Arg-114, His-142, and Gln-145. Arg-176 and Arg-230 together coordinate L-aspartate. Carbamoyl phosphate contacts are provided by Gly-271 and Pro-272.

It belongs to the aspartate/ornithine carbamoyltransferase superfamily. ATCase family. As to quaternary structure, heterododecamer (2C3:3R2) of six catalytic PyrB chains organized as two trimers (C3), and six regulatory PyrI chains organized as three dimers (R2).

The enzyme catalyses carbamoyl phosphate + L-aspartate = N-carbamoyl-L-aspartate + phosphate + H(+). It functions in the pathway pyrimidine metabolism; UMP biosynthesis via de novo pathway; (S)-dihydroorotate from bicarbonate: step 2/3. In terms of biological role, catalyzes the condensation of carbamoyl phosphate and aspartate to form carbamoyl aspartate and inorganic phosphate, the committed step in the de novo pyrimidine nucleotide biosynthesis pathway. This is Aspartate carbamoyltransferase catalytic subunit from Lawsonia intracellularis (strain PHE/MN1-00).